We begin with the raw amino-acid sequence, 282 residues long: MSDRGENGQARIVTVGNVRFGNDLPFVLIAGPCQIESRAHAEGVAAELHAICARLDIPLVFKASYDKANRTSVGGARGVGMERGLDILAGIRERFDIPVLTDIHDIGQCKPAAEAVDILQIPAFLCRQTDLLLAAGETGRTINVKKGQFLAPWDMRNVAAKIASTGNHNLLLTERGASFGYNTLVTDFRALPIMAQTGYPVVFDATHSVQQPGGQGTASGGDRTFAPILARAALAVGVASVFIECHPDPDRAPSDGPNMIPLDQMEETLRRLKQFDVLGKAG.

The protein belongs to the KdsA family.

It is found in the cytoplasm. It carries out the reaction D-arabinose 5-phosphate + phosphoenolpyruvate + H2O = 3-deoxy-alpha-D-manno-2-octulosonate-8-phosphate + phosphate. Its pathway is carbohydrate biosynthesis; 3-deoxy-D-manno-octulosonate biosynthesis; 3-deoxy-D-manno-octulosonate from D-ribulose 5-phosphate: step 2/3. It functions in the pathway bacterial outer membrane biogenesis; lipopolysaccharide biosynthesis. This chain is 2-dehydro-3-deoxyphosphooctonate aldolase, found in Granulibacter bethesdensis (strain ATCC BAA-1260 / CGDNIH1).